A 154-amino-acid polypeptide reads, in one-letter code: CS6 fimbrial subunit A (154 aa).

The first 18 residues, 1–18 (MKKTIGLILILASFGSHA), serve as a signal peptide directing secretion.

Its subcellular location is the fimbrium. In terms of biological role, fimbriae (also called pili), polar filaments radiating from the surface of the bacterium to a length of 0.5-1.5 micrometers and numbering 100-300 per cell, enable bacteria to colonize the epithelium of specific host organs. This chain is CS6 fimbrial subunit A (cssA), found in Escherichia coli.